We begin with the raw amino-acid sequence, 165 residues long: RNA pyrophosphohydrolase (165 aa).

The 142-residue stretch at 13–154 (PYRQGVGIML…KRPVYEQVVA (142 aa)) folds into the Nudix hydrolase domain. The Nudix box signature appears at 46–67 (GGIDAGEDPETAAWREMEEEIG).

The protein belongs to the Nudix hydrolase family. RppH subfamily. A divalent metal cation is required as a cofactor.

Functionally, accelerates the degradation of transcripts by removing pyrophosphate from the 5'-end of triphosphorylated RNA, leading to a more labile monophosphorylated state that can stimulate subsequent ribonuclease cleavage. The polypeptide is RNA pyrophosphohydrolase (Rhodospirillum rubrum (strain ATCC 11170 / ATH 1.1.1 / DSM 467 / LMG 4362 / NCIMB 8255 / S1)).